Reading from the N-terminus, the 130-residue chain is Sec-independent protein translocase protein TatB (130 aa).

A helical membrane pass occupies residues 1–21 (MFDISFTELIVIGIVALVVIG). The tract at residues 70 to 130 (VDSFQNSVHS…TPKEPRQSGS (61 aa)) is disordered. Basic and acidic residues-rich tracts occupy residues 80–89 (EINKIQETAD) and 96–111 (PEKE…KTEP).

It belongs to the TatB family. The Tat system comprises two distinct complexes: a TatABC complex, containing multiple copies of TatA, TatB and TatC subunits, and a separate TatA complex, containing only TatA subunits. Substrates initially bind to the TatABC complex, which probably triggers association of the separate TatA complex to form the active translocon.

Its subcellular location is the cell inner membrane. Its function is as follows. Part of the twin-arginine translocation (Tat) system that transports large folded proteins containing a characteristic twin-arginine motif in their signal peptide across membranes. Together with TatC, TatB is part of a receptor directly interacting with Tat signal peptides. TatB may form an oligomeric binding site that transiently accommodates folded Tat precursor proteins before their translocation. The protein is Sec-independent protein translocase protein TatB of Nitrosomonas eutropha (strain DSM 101675 / C91 / Nm57).